The chain runs to 648 residues: Biosynthetic arginine decarboxylase (648 aa).

Lys-109 bears the N6-(pyridoxal phosphate)lysine mark. 291-301 (IDVGGGLGIDF) contributes to the substrate binding site.

The protein belongs to the Orn/Lys/Arg decarboxylase class-II family. SpeA subfamily. Requires Mg(2+) as cofactor. The cofactor is pyridoxal 5'-phosphate.

The catalysed reaction is L-arginine + H(+) = agmatine + CO2. In terms of biological role, catalyzes the biosynthesis of agmatine from arginine. In Prochlorococcus marinus subsp. pastoris (strain CCMP1986 / NIES-2087 / MED4), this protein is Biosynthetic arginine decarboxylase.